The chain runs to 275 residues: Undecaprenyl-diphosphatase (275 aa).

Transmembrane regions (helical) follow at residues 8–28, 45–65, 92–112, 119–139, 197–217, 225–245, and 255–275; these read WTIV…PIPI, ARGL…VLII, FMFV…GVLF, FIGE…AAAI, FSFL…IPNI, ELWI…YFAL, and GNLK…LIFL.

This sequence belongs to the UppP family.

It is found in the cell membrane. The catalysed reaction is di-trans,octa-cis-undecaprenyl diphosphate + H2O = di-trans,octa-cis-undecaprenyl phosphate + phosphate + H(+). Catalyzes the dephosphorylation of undecaprenyl diphosphate (UPP). Confers resistance to bacitracin. This Oceanobacillus iheyensis (strain DSM 14371 / CIP 107618 / JCM 11309 / KCTC 3954 / HTE831) protein is Undecaprenyl-diphosphatase.